The primary structure comprises 199 residues: Protein-methionine-sulfoxide reductase heme-binding subunit MsrQ (199 aa).

4 consecutive transmembrane segments (helical) span residues tryptophan 10–isoleucine 30, leucine 82–isoleucine 102, proline 116–threonine 136, and valine 153–serine 173.

It belongs to the MsrQ family. In terms of assembly, heterodimer of a catalytic subunit (MsrP) and a heme-binding subunit (MsrQ). The cofactor is FMN. It depends on heme b as a cofactor.

It localises to the cell inner membrane. In terms of biological role, part of the MsrPQ system that repairs oxidized periplasmic proteins containing methionine sulfoxide residues (Met-O), using respiratory chain electrons. Thus protects these proteins from oxidative-stress damage caused by reactive species of oxygen and chlorine generated by the host defense mechanisms. MsrPQ is essential for the maintenance of envelope integrity under bleach stress, rescuing a wide series of structurally unrelated periplasmic proteins from methionine oxidation, including the primary periplasmic chaperone SurA and the lipoprotein Pal. MsrQ provides electrons for reduction to the reductase catalytic subunit MsrP, using the quinone pool of the respiratory chain. The protein is Protein-methionine-sulfoxide reductase heme-binding subunit MsrQ of Salmonella dublin (strain CT_02021853).